The primary structure comprises 528 residues: Biotin carboxylase 1, chloroplastic (528 aa).

A chloroplast-targeting transit peptide spans M1–H51. Residues K179, K221, G227–G228, E263–V266, and H271 contribute to the ATP site. The region spanning R183–M380 is the ATP-grasp domain. K300 contributes to the hydrogencarbonate binding site. E338 and E351 together coordinate ATP. The Mg(2+) site is built by E338, E351, and N353. Residues E338, E351, and N353 each contribute to the Mn(2+) site. The hydrogencarbonate site is built by R355, V358, and R401. R355 is a catalytic residue. R401 is a binding site for biotin.

As to quaternary structure, acetyl-CoA carboxylase is a heterohexamer composed of biotin carboxyl carrier protein, biotin carboxylase and two subunits each of ACCase subunit alpha and ACCase plastid-coded subunit beta (accD). Mg(2+) is required as a cofactor. Requires Mn(2+) as cofactor.

The protein localises to the plastid. It localises to the chloroplast. It catalyses the reaction N(6)-biotinyl-L-lysyl-[protein] + hydrogencarbonate + ATP = N(6)-carboxybiotinyl-L-lysyl-[protein] + ADP + phosphate + H(+). It functions in the pathway lipid metabolism; malonyl-CoA biosynthesis; malonyl-CoA from acetyl-CoA: step 1/1. Its function is as follows. This protein is a component of the acetyl coenzyme A carboxylase complex; first, biotin carboxylase catalyzes the carboxylation of the carrier protein and then the transcarboxylase transfers the carboxyl group to form malonyl-CoA. In Populus trichocarpa (Western balsam poplar), this protein is Biotin carboxylase 1, chloroplastic.